Consider the following 549-residue polypeptide: Cation/acetate symporter ActP (549 aa).

The next 13 membrane-spanning stretches (helical) occupy residues 33–53 (WQAI…TYWA), 76–96 (GLAI…SALV), 103–123 (GLIY…LIAE), 149–169 (LSAC…MVGA), 183–203 (IAVV…GMLA), 206–226 (WVQI…AFMV), 262–282 (ISAL…PHIL), 303–323 (GFMG…IMLV), 355–375 (LFLG…VAGL), 404–424 (VSKI…ILFE), 428–448 (IAFM…PIIL), 463–483 (IGGW…PTIW), and 493–513 (IFPY…GIWF).

The protein belongs to the sodium:solute symporter (SSF) (TC 2.A.21) family.

The protein localises to the cell inner membrane. Its function is as follows. Transports acetate. The protein is Cation/acetate symporter ActP of Enterobacter sp. (strain 638).